The chain runs to 617 residues: Dihydroxy-acid dehydratase (617 aa).

Asp81 serves as a coordination point for Mg(2+). Residue Cys122 coordinates [2Fe-2S] cluster. Residues Asp123 and Lys124 each contribute to the Mg(2+) site. The residue at position 124 (Lys124) is an N6-carboxylysine. Residue Cys195 coordinates [2Fe-2S] cluster. Glu491 contacts Mg(2+). Ser517 acts as the Proton acceptor in catalysis.

Belongs to the IlvD/Edd family. As to quaternary structure, homodimer. The cofactor is [2Fe-2S] cluster. Requires Mg(2+) as cofactor.

The enzyme catalyses (2R)-2,3-dihydroxy-3-methylbutanoate = 3-methyl-2-oxobutanoate + H2O. It catalyses the reaction (2R,3R)-2,3-dihydroxy-3-methylpentanoate = (S)-3-methyl-2-oxopentanoate + H2O. The protein operates within amino-acid biosynthesis; L-isoleucine biosynthesis; L-isoleucine from 2-oxobutanoate: step 3/4. It participates in amino-acid biosynthesis; L-valine biosynthesis; L-valine from pyruvate: step 3/4. Its function is as follows. Functions in the biosynthesis of branched-chain amino acids. Catalyzes the dehydration of (2R,3R)-2,3-dihydroxy-3-methylpentanoate (2,3-dihydroxy-3-methylvalerate) into 2-oxo-3-methylpentanoate (2-oxo-3-methylvalerate) and of (2R)-2,3-dihydroxy-3-methylbutanoate (2,3-dihydroxyisovalerate) into 2-oxo-3-methylbutanoate (2-oxoisovalerate), the penultimate precursor to L-isoleucine and L-valine, respectively. The chain is Dihydroxy-acid dehydratase from Hydrogenovibrio crunogenus (strain DSM 25203 / XCL-2) (Thiomicrospira crunogena).